The chain runs to 248 residues: Ribosomal RNA small subunit methyltransferase A (248 aa).

The S-adenosyl-L-methionine site is built by His-11, Leu-13, Gly-38, Glu-60, Asp-83, and Asn-101.

The protein belongs to the class I-like SAM-binding methyltransferase superfamily. rRNA adenine N(6)-methyltransferase family. RsmA subfamily.

Its subcellular location is the cytoplasm. The enzyme catalyses adenosine(1518)/adenosine(1519) in 16S rRNA + 4 S-adenosyl-L-methionine = N(6)-dimethyladenosine(1518)/N(6)-dimethyladenosine(1519) in 16S rRNA + 4 S-adenosyl-L-homocysteine + 4 H(+). In terms of biological role, specifically dimethylates two adjacent adenosines (A1518 and A1519) in the loop of a conserved hairpin near the 3'-end of 16S rRNA in the 30S particle. May play a critical role in biogenesis of 30S subunits. The polypeptide is Ribosomal RNA small subunit methyltransferase A (Aquifex aeolicus (strain VF5)).